A 360-amino-acid chain; its full sequence is Nucleoporin SEH1 (360 aa).

6 WD repeats span residues 10-49, 55-96, 111-152, 160-210, 217-258, and 276-315; these read DHKDLIHDVSFDFHGRRMATCSSDQSVKVWDKSESGEWHC, THSG…SNDK, DSRT…NLSQ, SCKL…RKYA, TVTD…KELT, and NHNSQVWRVSWNITGTVLASSGDDGCVRLWKANYMDNWKC. A Glycyl lysine isopeptide (Lys-Gly) (interchain with G-Cter in SUMO2) cross-link involves residue Lys12. At Ser190 the chain carries Phosphoserine. Residues 324–342 show a composition bias toward low complexity; it reads SPVNGSSQQGNSNPSVGSN. A disordered region spans residues 324–360; the sequence is SPVNGSSQQGNSNPSVGSNIPSLQNSLNGSSAGRKHS. Residues 343–354 are compositionally biased toward polar residues; the sequence is IPSLQNSLNGSS.

This sequence belongs to the WD repeat SEC13 family. Component of the Nup107-160 subcomplex of the nuclear pore complex (NPC). The Nup107-160 subcomplex includes NUP160, NUP133, NUP107, NUP98, NUP85, NUP43, NUP37, SEH1 and SEC13. The SEH1 subunit appears to be only weakly associated with the Nup107-160 subcomplex. Component of the GATOR2 subcomplex, composed of MIOS, SEC13, SEH1L, WDR24 and WDR59. The GATOR2 complex interacts with CASTOR1 and CASTOR2; the interaction is negatively regulated by arginine. The GATOR2 complex interacts with SESN1, SESN2 and SESN3; the interaction is negatively regulated by amino acids. SESN1, SESN2 and SESN3 convey leucine availability via direct interaction with SEH1L and WDR24.

The protein localises to the chromosome. It localises to the centromere. It is found in the kinetochore. The protein resides in the nucleus. Its subcellular location is the nuclear pore complex. The protein localises to the lysosome membrane. The GATOR2 complex is negatively regulated by the upstream amino acid sensors CASTOR1 and SESN2, which sequester the GATOR2 complex in absence of amino acids. In the presence of abundant amino acids, GATOR2 is released from CASTOR1 and SESN2 and activated. Component of the Nup107-160 subcomplex of the nuclear pore complex (NPC). The Nup107-160 subcomplex is required for the assembly of a functional NPC. The Nup107-160 subcomplex is also required for normal kinetochore microtubule attachment, mitotic progression and chromosome segregation. This subunit plays a role in recruitment of the Nup107-160 subcomplex to the kinetochore. Its function is as follows. As a component of the GATOR2 complex, functions as an activator of the amino acid-sensing branch of the mTORC1 signaling pathway. The GATOR2 complex indirectly activates mTORC1 through the inhibition of the GATOR1 subcomplex. GATOR2 probably acts as an E3 ubiquitin-protein ligase toward GATOR1. In the presence of abundant amino acids, the GATOR2 complex mediates ubiquitination of the NPRL2 core component of the GATOR1 complex, leading to GATOR1 inactivation. In the absence of amino acids, GATOR2 is inhibited, activating the GATOR1 complex. Within the GATOR2 complex, SEC13 and SEH1L are required to stabilize the complex. The polypeptide is Nucleoporin SEH1 (SEH1L) (Bos taurus (Bovine)).